The chain runs to 181 residues: Inorganic pyrophosphatase (181 aa).

Residues Lys16, Arg30, and Tyr42 each coordinate substrate. The Mg(2+) site is built by Asp52, Asp57, and Asp89. Tyr126 provides a ligand contact to substrate.

This sequence belongs to the PPase family. In terms of assembly, homohexamer. It depends on Mg(2+) as a cofactor.

Its subcellular location is the cytoplasm. It carries out the reaction diphosphate + H2O = 2 phosphate + H(+). In terms of biological role, catalyzes the hydrolysis of inorganic pyrophosphate (PPi) forming two phosphate ions. This is Inorganic pyrophosphatase from Ureaplasma parvum serovar 3 (strain ATCC 700970).